The sequence spans 137 residues: ER-derived vesicles protein erv14 (137 aa).

Topologically, residues 1-9 (MMSFGSFVY) are cytoplasmic. Residues 10-30 (IACLLLNGANMLLQIFCVIMF) traverse the membrane as a helical segment. Over 31–62 (SDLEMDYINPIDLCNKLNDLVMPEIISHTLVT) the chain is Extracellular. Residues 63–83 (LLLLLGKKWLLFLANLPLLVF) traverse the membrane as a helical segment. Residues 84-114 (HANQVIHKTHILDATEIFRQLGRHKRDNFIK) are Cytoplasmic-facing. The chain crosses the membrane as a helical span at residues 115-135 (VTFYLIMFFTLLYCMVMSLIQ). Over 136–137 (EE) the chain is Extracellular.

It belongs to the cornichon family.

It is found in the endoplasmic reticulum. The protein resides in the membrane. The protein localises to the golgi apparatus membrane. Its function is as follows. Regulates export of the secretory proteins from the endoplasmic reticulum in COPII-coated vesicles. This chain is ER-derived vesicles protein erv14 (erv14), found in Schizosaccharomyces pombe (strain 972 / ATCC 24843) (Fission yeast).